Consider the following 1084-residue polypeptide: MSSQSHPDGLSGRDQPVELLNPARVNHMPSTVDVATALPLQVAPSAVPMDLRLDHQFSLPVAEPALREQQLQQELLALKQKQQIQRQILIAEFQRQHEQLSRQHEAQLHEHIKQQQEMLAMKHQQELLEHQRKLERHRQEQELEKQHREQKLQQLKNKEKGKESAVASTEVKMKLQEFVLNKKKALAHRNLNHCISSDPRYWYGKTQHSSLDQSSPPQSGVSTSYNHPVLGMYDAKDDFPLRKTASEPNLKLRSRLKQKVAERRSSPLLRRKDGPVVTALKKRPLDVTDSACSSAPGSGPSSPNNSSGSVSAENGIAPAVPSIPAETSLAHRLVAREGSAAPLPLYTSPSLPNITLGLPATGPSAGTAGQQDAERLTLPALQQRLSLFPGTHLTPYLSTSPLERDGGAAHSPLLQHMVLLEQPPAQAPLVTGLGALPLHAQSLVGADRVSPSIHKLRQHRPLGRTQSAPLPQNAQALQHLVIQQQHQQFLEKHKQQFQQQQLQMNKIIPKPSEPARQPESHPEETEEELREHQALLDEPYLDRLPGQKEAHAQAGVQVKQEPIESDEEEAEPPREVEPGQRQPSEQELLFRQQALLLEQQRIHQLRNYQASMEAAGIPVSFGGHRPLSRAQSSPASATFPVSVQEPPTKPRFTTGLVYDTLMLKHQCTCGSSSSHPEHAGRIQSIWSRLQETGLRGKCECIRGRKATLEELQTVHSEAHTLLYGTNPLNRQKLDSKKLLGSLASVFVRLPCGGVGVDSDTIWNEVHSAGAARLAVGCVVELVFKVATGELKNGFAVVRPPGHHAEESTPMGFCYFNSVAVAAKLLQQRLSVSKILIVDWDVHHGNGTQQAFYSDPSVLYMSLHRYDDGNFFPGSGAPDEVGTGPGVGFNVNMAFTGGLDPPMGDAEYLAAFRTVVMPIASEFAPDVVLVSSGFDAVEGHPTPLGGYNLSARCFGYLTKQLMGLAGGRIVLALEGGHDLTAICDASEACVSALLGNELDPLPEKVLQQRPNANAVRSMEKVMEIHSKYWRCLQRTTSTAGRSLIEAQTCENEEAETVTAMASLSVGVKPAEKRPDEEPMEEEPPL.

The stretch at 67–177 (REQQLQQELL…STEVKMKLQE (111 aa)) forms a coiled coil. An interaction with MEF2A region spans residues 118-313 (MLAMKHQQEL…NNSSGSVSAE (196 aa)). Basic and acidic residues predominate over residues 133 to 163 (KLERHRQEQELEKQHREQKLQQLKNKEKGKE). Disordered stretches follow at residues 133–166 (KLERHRQEQELEKQHREQKLQQLKNKEKGKESAV), 206–226 (TQHSSLDQSSPPQSGVSTSYN), and 240–315 (PLRK…AENG). Ser210 is modified (phosphoserine). Ser246 bears the Phosphoserine; by CaMK4 and SIK1 mark. The segment covering 259–274 (KVAERRSSPLLRRKDG) has biased composition (basic and acidic residues). Residues 290–312 (SACSSAPGSGPSSPNNSSGSVSA) are compositionally biased toward low complexity. The short motif at 349 to 354 (PSLPNI) is the PxLPxI/L motif; mediates interaction with ANKRA2 and 14-3-3 proteins element. Residue Ser350 is modified to Phosphoserine. Ser467 carries the post-translational modification Phosphoserine; by CaMK4 and SIK1. 3 disordered regions span residues 509-531 (PKPSEPARQPESHPEETEEELRE), 548-585 (KEAHAQAGVQVKQEPIESDEEEAEPPREVEPGQRQPSE), and 626-646 (PLSRAQSSPASATFPVSVQEP). Positions 516–531 (RQPESHPEETEEELRE) are enriched in basic and acidic residues. Residue Lys559 forms a Glycyl lysine isopeptide (Lys-Gly) (interchain with G-Cter in SUMO) linkage. Position 565 is a phosphoserine (Ser565). Positions 629-641 (RAQSSPASATFPV) are enriched in polar residues. The residue at position 632 (Ser632) is a Phosphoserine; by CaMK4. Ser633 carries the post-translational modification Phosphoserine. Residues 655 to 1084 (GLVYDTLMLK…EEPMEEEPPL (430 aa)) are histone deacetylase. Zn(2+) is bound by residues Cys667, Cys669, His675, and Cys751. Residue His803 is part of the active site. The Nuclear export signal motif lies at 1051-1084 (EEAETVTAMASLSVGVKPAEKRPDEEPMEEEPPL). A disordered region spans residues 1061–1084 (SLSVGVKPAEKRPDEEPMEEEPPL).

This sequence belongs to the histone deacetylase family. HD type 2 subfamily. In terms of assembly, homodimer. Homodimerization via its N-terminal domain. Interacts with MEF2A. Interacts with MEF2C and MEF2D. Interacts with AHRR. Interacts with NR2C1. Interacts with HDAC7. Interacts with a 14-3-3 chaperone proteins in a phosphorylation dependent manner. Interacts with 14-3-3 protein YWHAB. Interacts with BTBD14B. Interacts with KDM5B. Interacts with MYOCD. Interacts with MORC2. Interacts (via PxLPxI/L motif) with ANKRA2 (via ankyrin repeats). Interacts with CUL7 (as part of the 3M complex); negatively regulated by ANKRA2. Interacts with EP300 in the presence of TFAP2C. Interacts with HSPA1A and HSPA1B leading to their deacetylation at 'Lys-77'. Interacts with ZBTB7B; the interaction allows the recruitment of HDAC4 on CD8 loci for deacetylation and possible inhibition of CD8 genes expression. Interacts with DHX36. Interacts with SIK3; this interaction leads to HDAC4 retention in the cytoplasm. Interacts with ZNF638. Post-translationally, phosphorylated by CaMK4 at Ser-246, Ser-467 and Ser-632. Phosphorylation at other residues by CaMK2D is required for the interaction with 14-3-3. Phosphorylation at Ser-350, within the PxLPxI/L motif, impairs the binding of ANKRA2 but generates a high-affinity docking site for 14-3-3. In terms of processing, sumoylation on Lys-559 is promoted by the E3 SUMO-protein ligase RANBP2, and prevented by phosphorylation by CaMK4. Ubiquitous.

It localises to the nucleus. The protein localises to the cytoplasm. It carries out the reaction N(6)-acetyl-L-lysyl-[histone] + H2O = L-lysyl-[histone] + acetate. Its function is as follows. Responsible for the deacetylation of lysine residues on the N-terminal part of the core histones (H2A, H2B, H3 and H4). Histone deacetylation gives a tag for epigenetic repression and plays an important role in transcriptional regulation, cell cycle progression and developmental events. Histone deacetylases act via the formation of large multiprotein complexes. Involved in muscle maturation via its interaction with the myocyte enhancer factors such as MEF2A, MEF2C and MEF2D. Involved in the MTA1-mediated epigenetic regulation of ESR1 expression in breast cancer. Deacetylates HSPA1A and HSPA1B at 'Lys-77' leading to their preferential binding to co-chaperone STUB1. This Homo sapiens (Human) protein is Histone deacetylase 4.